We begin with the raw amino-acid sequence, 336 residues long: Dihydrolipoyl dehydrogenase (336 aa).

FAD-binding positions include 34-42, Lys51, and Gly115; that span reads EKEVVGGIC. Cys42 and Cys47 are oxidised to a cystine. NAD(+)-binding positions include 180-184, Glu203, Val237, and 264-267; these read GGGVI and SVGT. FAD is bound by residues Asp304 and Ala312.

This sequence belongs to the class-I pyridine nucleotide-disulfide oxidoreductase family. Homodimer. The cofactor is FAD.

It is found in the cytoplasm. It carries out the reaction N(6)-[(R)-dihydrolipoyl]-L-lysyl-[protein] + NAD(+) = N(6)-[(R)-lipoyl]-L-lysyl-[protein] + NADH + H(+). Its function is as follows. Lipoamide dehydrogenase is a component of the alpha-ketoacid dehydrogenase complexes. The chain is Dihydrolipoyl dehydrogenase (pdhD) from Acholeplasma laidlawii.